Consider the following 1067-residue polypeptide: DNA-directed RNA polymerase subunit beta (1067 aa).

This sequence belongs to the RNA polymerase beta chain family. In plastids the minimal PEP RNA polymerase catalytic core is composed of four subunits: alpha, beta, beta', and beta''. When a (nuclear-encoded) sigma factor is associated with the core the holoenzyme is formed, which can initiate transcription.

It is found in the plastid. The protein localises to the chloroplast. The catalysed reaction is RNA(n) + a ribonucleoside 5'-triphosphate = RNA(n+1) + diphosphate. In terms of biological role, DNA-dependent RNA polymerase catalyzes the transcription of DNA into RNA using the four ribonucleoside triphosphates as substrates. The chain is DNA-directed RNA polymerase subunit beta from Ipomoea purpurea (Common morning glory).